The primary structure comprises 70 residues: MLKMGVVLFIFLVLFPLATLQLDADQPVERYAENKQLLSPDERREIILHALGTRCCSWDVCDHPSCTCCG.

The first 24 residues, methionine 1–alanine 24, serve as a signal peptide directing secretion. A propeptide spanning residues aspartate 25–arginine 44 is cleaved from the precursor. 3 cysteine pairs are disulfide-bonded: cysteine 55–cysteine 68, cysteine 56–cysteine 66, and cysteine 61–cysteine 69. The residue at position 58 (tryptophan 58) is a 6'-bromotryptophan; partial. Cysteine 69 is subject to Cysteine amide; partial.

This sequence belongs to the conotoxin M superfamily. In terms of processing, two short peptides are produced from this precursor; Conotoxin tx3a-b is amidated at Cys-69 (but has no bromotryptophan), whereas conotoxin tx3a-a has an unmodified Gly-70 and a bromotryptophan. Two elongated peptides are also produced; Conotoxin elongated-tx3a-b is amidated at Cys-69 (but has no bromotryptophan), whereas conotoxin elongated tx3a-a has an unmodified Gly-70 (but has no bromotryptophan). Post-translationally, ju et al. (2022) describe a disulfide connectivity (C55-C61; C56-C69; C66-C68) that differs from that of Han and colleagues (2006), McDougal et al. (2008), and Ueberheide et al. (2009). Expressed by the venom duct. Is present in all duct parts with a highest content in part 2 (proximal of the venom bulb) and then decreases in concentration toward the end of the duct.

It is found in the secreted. Intracranial injection into mice causes scratching and hyperactivity. In vitro, inhibits proliferation of the mice ovarian cancer cells ID8. The sequence is that of Conotoxin elongated-tx3a-a from Conus textile (Cloth-of-gold cone).